Here is a 124-residue protein sequence, read N- to C-terminus: Small ribosomal subunit protein uS12 (124 aa).

Positions 1–26 are disordered; sequence MPTISQLVGSERKRLTKKTKSPALKA. Asp89 carries the 3-methylthioaspartic acid modification. The disordered stretch occupies residues 104 to 124; sequence TAGVKDRRQSRSKYGAKAPKD.

Belongs to the universal ribosomal protein uS12 family. In terms of assembly, part of the 30S ribosomal subunit. Contacts proteins S8 and S17. May interact with IF1 in the 30S initiation complex.

Functionally, with S4 and S5 plays an important role in translational accuracy. In terms of biological role, interacts with and stabilizes bases of the 16S rRNA that are involved in tRNA selection in the A site and with the mRNA backbone. Located at the interface of the 30S and 50S subunits, it traverses the body of the 30S subunit contacting proteins on the other side and probably holding the rRNA structure together. The combined cluster of proteins S8, S12 and S17 appears to hold together the shoulder and platform of the 30S subunit. The chain is Small ribosomal subunit protein uS12 from Prochlorococcus marinus (strain MIT 9215).